Here is a 449-residue protein sequence, read N- to C-terminus: Tryptophan--tRNA ligase (449 aa).

ATP contacts are provided by residues 10–12 (TTT) and 18–19 (GN). The 'HIGH' region motif lies at 11-19 (TTGTPHLGN). Aspartate 143 contacts L-tryptophan. ATP is bound by residues 155–157 (GRD), leucine 197, and 204–208 (KMSKS). Positions 204 to 208 (KMSKS) match the 'KMSKS' region motif.

This sequence belongs to the class-I aminoacyl-tRNA synthetase family. In terms of assembly, homodimer.

Its subcellular location is the cytoplasm. The enzyme catalyses tRNA(Trp) + L-tryptophan + ATP = L-tryptophyl-tRNA(Trp) + AMP + diphosphate + H(+). Catalyzes the attachment of tryptophan to tRNA(Trp). This Pseudomonas syringae pv. tomato (strain ATCC BAA-871 / DC3000) protein is Tryptophan--tRNA ligase.